The primary structure comprises 140 residues: UPF0134 protein MPN_130 (140 aa).

Belongs to the UPF0134 family.

The protein is UPF0134 protein MPN_130 of Mycoplasma pneumoniae (strain ATCC 29342 / M129 / Subtype 1) (Mycoplasmoides pneumoniae).